Here is a 152-residue protein sequence, read N- to C-terminus: MASVNYPSSFDKKDEFEDMSILDKIWFRCKQQPLVPIGCLATCVAVALAAKGVRTGDRVNAQKWFRWRVGLQGLTLVALVGGSYIYDRQQVTQRKTDEDLAREKAQHRQDLWIQELERRDQETKRNKERARLARARLEAERSTGILDDEPPK.

Residues 6-97 enclose the HIG1 domain; it reads YPSSFDKKDE…RQQVTQRKTD (92 aa). The next 2 helical transmembrane spans lie at 34–50 and 64–86; these read LVPI…ALAA and WFRW…SYIY. Residues 113 to 143 adopt a coiled-coil conformation; it reads IQELERRDQETKRNKERARLARARLEAERST.

Belongs to the RCF1 family. As to quaternary structure, associates with the respiratory chain complex III/complex IV supercomplex.

The protein resides in the mitochondrion membrane. Its function is as follows. Cytochrome c oxidase subunit which plays a role in assembly of respiratory supercomplexes. This chain is Respiratory supercomplex factor 1, mitochondrial (RCF1), found in Komagataella phaffii (strain GS115 / ATCC 20864) (Yeast).